Reading from the N-terminus, the 400-residue chain is Subtilisin-like protease 11 (400 aa).

A signal peptide spans 1 to 19 (MGLFKVIFTAVAALSAVDA). Residues 20-117 (AELLSSAKSK…VEHDRHVYIS (98 aa)) constitute a propeptide that is removed on maturation. The region spanning 35-116 (SYLVVMKDSV…FVEHDRHVYI (82 aa)) is the Inhibitor I9 domain. One can recognise a Peptidase S8 domain in the interval 127–400 (SWGLGRVSHR…NKLLYNGSGK (274 aa)). N-linked (GlcNAc...) asparagine glycosylation occurs at asparagine 138. The active-site Charge relay system is aspartate 159. Asparagine 181 is a glycosylation site (N-linked (GlcNAc...) asparagine). Catalysis depends on histidine 191, which acts as the Charge relay system. Residues asparagine 252 and asparagine 337 are each glycosylated (N-linked (GlcNAc...) asparagine). Serine 346 (charge relay system) is an active-site residue. 2 N-linked (GlcNAc...) asparagine glycosylation sites follow: asparagine 388 and asparagine 396.

This sequence belongs to the peptidase S8 family.

It is found in the secreted. Secreted subtilisin-like serine protease with keratinolytic activity that contributes to pathogenicity. This is Subtilisin-like protease 11 (SUB11) from Arthroderma benhamiae (strain ATCC MYA-4681 / CBS 112371) (Trichophyton mentagrophytes).